Reading from the N-terminus, the 627-residue chain is 2-oxoacid:ferredoxin oxidoreductase 1, subunit alpha (627 aa).

A YPITP motif motif is present at residues 253–257 (YPITP). Substrate is bound by residues Thr256 and Arg344.

In terms of assembly, heterodimer composed of an alpha and a beta subunit.

The enzyme catalyses a 2-oxocarboxylate + 2 oxidized [2Fe-2S]-[ferredoxin] + CoA = an acyl-CoA + 2 reduced [2Fe-2S]-[ferredoxin] + CO2 + H(+). With respect to regulation, inhibited by low concentration of 4-fluoro-7-nitrobenzofurazan (NBD-F). In terms of biological role, catalyzes the coenzyme A-dependent oxidative decarboxylation of different 2-oxoacids such as 2-oxoglutarate, pyruvate and 2-oxobutyrate to form their CoA derivatives. The polypeptide is 2-oxoacid:ferredoxin oxidoreductase 1, subunit alpha (Sulfurisphaera tokodaii (strain DSM 16993 / JCM 10545 / NBRC 100140 / 7) (Sulfolobus tokodaii)).